The following is a 304-amino-acid chain: Protein pxr1 (304 aa).

The segment covering 1–11 has biased composition (basic residues); it reads MGLAAPRKKTK. Disordered stretches follow at residues 1–25, 144–238, and 256–276; these read MGLA…SRST, NATA…DTET, and TSLL…MGRR. The segment covering 15 to 25 has biased composition (polar residues); sequence DPNNTSWSRST. One can recognise a G-patch domain in the interval 25–79; sequence TDGFGHRILKAQGWTPGDFLGARNATHSDLFTTASASHIRVVLKDDTLGLGARPK. 2 stretches are compositionally biased toward basic and acidic residues: residues 154–170 and 204–238; these read LRVD…HENG and GKEM…DTET. Over residues 256-266 the composition is skewed to polar residues; that stretch reads TSLLASNGPST.

This sequence belongs to the PINX1 family.

The protein resides in the nucleus. It localises to the nucleolus. In terms of biological role, involved in rRNA-processing at A0, A1 and A2 sites and negatively regulates telomerase. This chain is Protein pxr1 (pxr1), found in Aspergillus fumigatus (strain ATCC MYA-4609 / CBS 101355 / FGSC A1100 / Af293) (Neosartorya fumigata).